The sequence spans 376 residues: Chaperone protein DnaJ 2 (376 aa).

The J domain maps to 8 to 72 (DYYEILGVPR…EKRKLYDMYG (65 aa)). A CR-type zinc finger spans residues 143 to 219 (GTTVPIEVER…CTGRGYGLVK (77 aa)). 8 residues coordinate Zn(2+): C156, C159, C172, C175, C194, C197, C207, and C210. CXXCXGXG motif repeat units follow at residues 156 to 163 (CSACGGTG), 172 to 179 (CPTCGGRG), 194 to 201 (CPTCGGEG), and 207 to 214 (CHACTGRG).

It belongs to the DnaJ family. As to quaternary structure, homodimer. Requires Zn(2+) as cofactor.

It is found in the cytoplasm. Participates actively in the response to hyperosmotic and heat shock by preventing the aggregation of stress-denatured proteins and by disaggregating proteins, also in an autonomous, DnaK-independent fashion. Unfolded proteins bind initially to DnaJ; upon interaction with the DnaJ-bound protein, DnaK hydrolyzes its bound ATP, resulting in the formation of a stable complex. GrpE releases ADP from DnaK; ATP binding to DnaK triggers the release of the substrate protein, thus completing the reaction cycle. Several rounds of ATP-dependent interactions between DnaJ, DnaK and GrpE are required for fully efficient folding. Also involved, together with DnaK and GrpE, in the DNA replication of plasmids through activation of initiation proteins. In Aquifex aeolicus (strain VF5), this protein is Chaperone protein DnaJ 2.